Here is a 197-residue protein sequence, read N- to C-terminus: MYAYLKGIITKITAKYIVLETNGIGYILHVANPYAYSGQVNQEDQIYVHQVVREDAHLLYGFRSEDEKKLFLSLISVSGIGPVSALAIIAADDNAGLVQAIETKNITYLTKFPKIGKKTAQQMVLDLEGKVVVAGDDLPAKVAVQASAENQELEEAMEAMLALGYKATELKKIKKFFEGTTDTAENYIKSALKMLVK.

The segment at 1-63 (MYAYLKGIIT…EDAHLLYGFR (63 aa)) is domain I. The interval 64 to 142 (SEDEKKLFLS…VAGDDLPAKV (79 aa)) is domain II. Residues 143–147 (AVQAS) are flexible linker. Residues 148-197 (AENQELEEAMEAMLALGYKATELKKIKKFFEGTTDTAENYIKSALKMLVK) are domain III.

It belongs to the RuvA family. Homotetramer. Forms an RuvA(8)-RuvB(12)-Holliday junction (HJ) complex. HJ DNA is sandwiched between 2 RuvA tetramers; dsDNA enters through RuvA and exits via RuvB. An RuvB hexamer assembles on each DNA strand where it exits the tetramer. Each RuvB hexamer is contacted by two RuvA subunits (via domain III) on 2 adjacent RuvB subunits; this complex drives branch migration. In the full resolvosome a probable DNA-RuvA(4)-RuvB(12)-RuvC(2) complex forms which resolves the HJ.

It localises to the cytoplasm. The RuvA-RuvB-RuvC complex processes Holliday junction (HJ) DNA during genetic recombination and DNA repair, while the RuvA-RuvB complex plays an important role in the rescue of blocked DNA replication forks via replication fork reversal (RFR). RuvA specifically binds to HJ cruciform DNA, conferring on it an open structure. The RuvB hexamer acts as an ATP-dependent pump, pulling dsDNA into and through the RuvAB complex. HJ branch migration allows RuvC to scan DNA until it finds its consensus sequence, where it cleaves and resolves the cruciform DNA. This chain is Holliday junction branch migration complex subunit RuvA, found in Streptococcus pneumoniae serotype 19F (strain G54).